The chain runs to 575 residues: Mitochondrial 2-methylisocitrate lyase ICL2 (575 aa).

Cys238 is a catalytic residue.

It belongs to the isocitrate lyase/PEP mutase superfamily. Isocitrate lyase family.

It is found in the mitochondrion matrix. The catalysed reaction is (2S,3R)-3-hydroxybutane-1,2,3-tricarboxylate = pyruvate + succinate. It participates in organic acid metabolism; propanoate degradation. Functionally, catalyzes the formation of pyruvate and succinate from 2-methylisocitrate during the metabolism of endogenous propionyl-CoA. Does not act on isocitrate. The polypeptide is Mitochondrial 2-methylisocitrate lyase ICL2 (ICL2) (Saccharomyces cerevisiae (strain ATCC 204508 / S288c) (Baker's yeast)).